The primary structure comprises 143 residues: SsrA-binding protein (143 aa).

This sequence belongs to the SmpB family.

It localises to the cytoplasm. In terms of biological role, required for rescue of stalled ribosomes mediated by trans-translation. Binds to transfer-messenger RNA (tmRNA), required for stable association of tmRNA with ribosomes. tmRNA and SmpB together mimic tRNA shape, replacing the anticodon stem-loop with SmpB. tmRNA is encoded by the ssrA gene; the 2 termini fold to resemble tRNA(Ala) and it encodes a 'tag peptide', a short internal open reading frame. During trans-translation Ala-aminoacylated tmRNA acts like a tRNA, entering the A-site of stalled ribosomes, displacing the stalled mRNA. The ribosome then switches to translate the ORF on the tmRNA; the nascent peptide is terminated with the 'tag peptide' encoded by the tmRNA and targeted for degradation. The ribosome is freed to recommence translation, which seems to be the essential function of trans-translation. The polypeptide is SsrA-binding protein (Deinococcus geothermalis (strain DSM 11300 / CIP 105573 / AG-3a)).